A 411-amino-acid chain; its full sequence is ATP-dependent RNA helicase eIF4A (411 aa).

The disordered stretch occupies residues 1 to 23 (MSKPEDTSAAAAAPAGEAGNNLN). The span at 9 to 19 (AAAAAPAGEAG) shows a compositional bias: low complexity. The Q motif motif lies at 38–66 (DNFDNMELKEELLRGVYAYGFERPSAIQA). The region spanning 69-239 (IVPVIKGHDV…KKFMRDPIRI (171 aa)) is the Helicase ATP-binding domain. Position 82-89 (82-89 (AQSGTGKT)) interacts with ATP. The short motif at 187–190 (DEAD) is the DEAD box element. The Helicase C-terminal domain maps to 250-411 (GIKQFYVAVE…EMPLNVADLI (162 aa)).

The protein belongs to the DEAD box helicase family. eIF4A subfamily. As to quaternary structure, component of the eIF4F complex, which composition varies with external and internal environmental conditions. It is composed of at least eIF4A, eIF4E and eIF4G.

The protein resides in the cytoplasm. It catalyses the reaction ATP + H2O = ADP + phosphate + H(+). ATP-dependent RNA helicase which is a subunit of the eIF4F complex involved in cap recognition and is required for mRNA binding to ribosome. In the current model of translation initiation, eIF4A unwinds RNA secondary structures in the 5'-UTR of mRNAs which is necessary to allow efficient binding of the small ribosomal subunit, and subsequent scanning for the initiator codon. The chain is ATP-dependent RNA helicase eIF4A (TIF1) from Mycosarcoma maydis (Corn smut fungus).